The following is a 647-amino-acid chain: Auxin efflux carrier component 2 (647 aa).

Over 1–7 the chain is Extracellular; sequence MITGKDM. Residues 8 to 28 traverse the membrane as a helical segment; sequence YDVLAAMVPLYVAMILAYGSV. Topologically, residues 29–38 are cytoplasmic; it reads RWWGIFTPDQ. Residues 39-59 form a helical membrane-spanning segment; it reads CSGINRFVAVFAVPLLSFHFI. Val51 provides a ligand contact to (indol-3-yl)acetate. The Extracellular segment spans residues 60 to 68; sequence SSNDPYAMN. The chain crosses the membrane as a helical span at residues 69-89; the sequence is YHFLAADSLQKVVILAALFLW. Over 90-100 the chain is Cytoplasmic; that stretch reads QAFSRRGSLEW. A helical membrane pass occupies residues 101–121; sequence MITLFSLSTLPNTLVMGIPLL. (indol-3-yl)acetate-binding residues include Asn112 and Leu114. The Extracellular portion of the chain corresponds to 122–131; it reads RAMYGDFSGN. Residues 132-152 traverse the membrane as a helical segment; it reads LMVQIVVLQSIIWYTLMLFLF. (indol-3-yl)acetate is bound at residue Tyr145. Residues 153 to 507 lie on the Cytoplasmic side of the membrane; that stretch reads EFRGAKLLIS…LIRNPNTYSS (355 aa). Ser237, Ser258, and Ser310 each carry phosphoserine. Positions 339–380 are disordered; the sequence is SVPSYPPPNPMFTGSTSGASGVKKKESGGGGSGGGVGVGGQN. Residue Thr354 is modified to Phosphothreonine. Gly residues predominate over residues 366 to 378; it reads GGGGSGGGVGVGG. Ser393 is subject to Phosphoserine. Disordered regions lie at residues 397 to 420 and 440 to 481; these read EANAKNAMTRGSSTDVSTDPKVSI and PGRK…QQMP. The helical transmembrane segment at 508–528 threads the bilayer; the sequence is LFGLAWSLVSFKWNIKMPTIM. Topologically, residues 529-531 are extracellular; sequence SGS. Residues 532-552 form a helical membrane-spanning segment; it reads ISILSDAGLGMAMFSLGLFMA. Residues 553 to 568 are Cytoplasmic-facing; the sequence is LQPKIIACGKSVAGFA. Residues 569–589 form a helical membrane-spanning segment; sequence MAVRFLTGPAVIAATSIAIGI. The Extracellular portion of the chain corresponds to 590–592; that stretch reads RGD. The chain crosses the membrane as a helical span at residues 593–613; sequence LLHIAIVQAALPQGIVPFVFA. Ile607 and Val608 together coordinate (indol-3-yl)acetate. Over 614-626 the chain is Cytoplasmic; it reads KEYNVHPDILSTA. The chain crosses the membrane as a helical span at residues 627–647; that stretch reads VIFGMLVALPVTVLYYVLLGL.

Belongs to the auxin efflux carrier (TC 2.A.69.1) family. Homodimer. Interacts with FYPP1 and FYPP3. Component of a complex made of PINs (e.g. PIN1 and PIN2), MAB4/MELs (e.g. NPY1/MAB4 and NPY5/MEL1) and AGC kinases (e.g. D6PK and PID) at the plasma membrane. Binds directly to NPY1/MAB4, NPY5/MEL1 and PID. In terms of tissue distribution, root-specific. Localized to the cortex, epidermis and lateral root cap, predominantly at the upper side of cells.

It localises to the cell membrane. Functionally, acts as a component of the auxin efflux carrier. Seems to be involved in the root-specific auxin transport, and mediates the root gravitropism. Its particular localization suggests a role in the translocation of auxin towards the elongation zone. Recrutes NPY proteins (e.g. NPY1/MAB4 and NPY5/MEL1) to the plasma membrane in a polar basal localization in root epidermis; this activity is optimized by AGC kinases-mediated (e.g. D6PK and PID) phosphorylation that limits their lateral diffusion-based escape. The chain is Auxin efflux carrier component 2 from Arabidopsis thaliana (Mouse-ear cress).